The chain runs to 244 residues: MSRLAECTISDTVDELVQRAKLAEQAERYDDMAGACKTMAKMRNELNNEEANLLSVAYKNVVGARRSSWRIMSSIAKKQAGTPLAHQHDIYLKKVEEELIQICNDVLALPVLPITEKIGAEAKIFYYKMMGDYYRYSAEVQEGEQNDKSTEAAEEANQKATSLAEAELSVTHPIRLGLALNFSVFYYEIKNMPEKACSLAKAAFDAAITEVDSIKDETYKDSTLIMQLLRDNLTLWNSECETDS.

It belongs to the 14-3-3 family.

The polypeptide is 14-3-3 protein homolog 1 (Echinococcus granulosus (Hydatid tapeworm)).